A 292-amino-acid chain; its full sequence is Syntaxin-19 (292 aa).

The 63-residue stretch at 207–269 (LSEIEQRHKE…NNTKEKFGLA (63 aa)) folds into the t-SNARE coiled-coil homology domain.

This sequence belongs to the syntaxin family. As to quaternary structure, interacts with EGFR. As to expression, expressed in stomach, lung and skin (at protein level). In stomach, strongly expressed in the mucosa of the fundus, in epithelial cells of gastric pits, and in gastric glands (at protein level). In skin, expressed in the epidermis, dermis, and epithelial layer of the hair bulb (at protein level).

It is found in the cell membrane. Its subcellular location is the cytoplasm. Functionally, plays a role in endosomal trafficking of the epidermal growth factor receptor (EGFR). This is Syntaxin-19 from Mus musculus (Mouse).